Reading from the N-terminus, the 447-residue chain is Signal recognition particle 54 kDa protein (447 aa).

Residues 105–112 (GVQGSGKT), 187–191 (DTAGR), and 247–250 (TKMD) each bind GTP.

This sequence belongs to the GTP-binding SRP family. SRP54 subfamily. Part of the signal recognition particle protein translocation system, which is composed of SRP and FtsY. Archaeal SRP consists of a 7S RNA molecule of 300 nucleotides and two protein subunits: SRP54 and SRP19.

The protein resides in the cytoplasm. The enzyme catalyses GTP + H2O = GDP + phosphate + H(+). Functionally, involved in targeting and insertion of nascent membrane proteins into the cytoplasmic membrane. Binds to the hydrophobic signal sequence of the ribosome-nascent chain (RNC) as it emerges from the ribosomes. The SRP-RNC complex is then targeted to the cytoplasmic membrane where it interacts with the SRP receptor FtsY. The protein is Signal recognition particle 54 kDa protein of Hyperthermus butylicus (strain DSM 5456 / JCM 9403 / PLM1-5).